A 452-amino-acid chain; its full sequence is MKDRHGLLSAPIGRVLLNMSLPNLIGIMTILGFSLADTFFISQLGTEALAAISFTFPVTLIISSIAIGVGAGVSTNLGRLIGSGNAPQAKVFLHDALLLTFILIASLSALGSIFIEPLFSLLGANETSLPLIHDYMMYWYVGAPLLVLLMVGNQGLRSTGDTRSPAMIMTLAAIINLILDPLLIFGIGPFPRLEIQGAAIATLFSWLVALSLSGYLLIIKHRMLERAAFDIDRMRANWSKLAHIAQPAALMNLINPLANAVIMAMLAHIDHSAVAAFGAGTRLESVLLIVVMALSSSLMPFIAQNLGAGQPQRAKQALLLSLKFILVFQTLLYIPLAFFAQPLASLFSTDPQVLEWLSFYILVLPCAYGPLGIVIIFATALNAYHRPMSSLVINLCRLVLLMLPLAALGSYIDGVKGLLLALPITNLLMGIACYYLAQRICEPVKATTADTL.

12 helical membrane passes run L21–I41, L49–V69, A96–E116, L131–V151, M167–I187, A199–I219, A248–D270, L283–A303, F324–A344, L357–F377, V392–I412, and G417–A437.

Belongs to the multi antimicrobial extrusion (MATE) (TC 2.A.66.1) family.

It localises to the cell inner membrane. Its function is as follows. Flavin adenine dinucleotide (FAD) transporter that facilitates export of flavin electron shuttles. In Shewanella oneidensis (strain ATCC 700550 / JCM 31522 / CIP 106686 / LMG 19005 / NCIMB 14063 / MR-1), this protein is FAD transporter.